We begin with the raw amino-acid sequence, 196 residues long: Phosphate-specific transport system accessory protein PhoU homolog (196 aa).

This sequence belongs to the PhoU family. Homodimer.

The protein resides in the cytoplasm. Functionally, plays a role in the regulation of phosphate uptake. This is Phosphate-specific transport system accessory protein PhoU homolog from Archaeoglobus fulgidus (strain ATCC 49558 / DSM 4304 / JCM 9628 / NBRC 100126 / VC-16).